Consider the following 472-residue polypeptide: MNTSIEQKPFNRSVIVGILLAGAFVAILNQTLLITALPHIMRDFNVDANQAQWLTTSFMLTNGILIPITAFLIEKFTSRALLITAMSIFTAGTVVGAFAPNFPVLLTARIIQAAGAGIMMPLMQTVFLTIFPIEKRGQAMGMVGLVISFAPAIGPTLSGWAVEAFSWRSLFYIILPFAVIDLILASILMKNVTTLRKTQIDILSVILSTFGFGGLLYGFSSVGSYGWSSSTVLISLLVGVIALLLFITRQMKLKKPMLEFRVFTFGVFSLTTLLGTLVFALLIGTETILPLYTQNVRDVTAFDTGLMLLPGAVVMGFMSPIIGRIFDRVGGRGLAIAGFCIIFLTSLPFMQLTDHTSLAWIVVLYTVRLLGTAMIMMPVTTAGINALPRHLIPHGTAMNNTIRQVGGSIGTALLVSVMSNQAAHAGTTNVKHAALHGMNAAFIVAAVIALVGFLLSFTLKKPQRPAEQQPAR.

Transmembrane regions (helical) follow at residues 14–34 (VIVGILLAGAFVAILNQTLLI), 53–73 (WLTTSFMLTNGILIPITAFLI), 80–100 (ALLITAMSIFTAGTVVGAFAP), 113–133 (AAGAGIMMPLMQTVFLTIFPI), 142–162 (MVGLVISFAPAIGPTLSGWAV), 169–189 (SLFYIILPFAVIDLILASILM), 202–222 (ILSVILSTFGFGGLLYGFSSV), 227–247 (WSSSTVLISLLVGVIALLLFI), 263–283 (FTFGVFSLTTLLGTLVFALLI), 302–322 (FDTGLMLLPGAVVMGFMSPII), 333–353 (GLAIAGFCIIFLTSLPFMQLT), 359–379 (AWIVVLYTVRLLGTAMIMMPV), 405–427 (VGGSIGTALLVSVMSNQAAHAGT), and 437–457 (GMNAAFIVAAVIALVGFLLSF).

It belongs to the major facilitator superfamily. EmrB family.

The protein localises to the cell membrane. This is an uncharacterized protein from Bacillus subtilis (strain 168).